The chain runs to 136 residues: MPRDLFSDALTRLRNALRVNKQTVIIPFSNLNYSFSNILLEEHLLEKKTILSKKYIKLEGLKFYNKKSDHTLFNFFKNCQRLSKPSNRLYIKAGDIPLIDNGLGFVILSTSYGLMTGKKARALNIGGELLCQFNFQ.

This sequence belongs to the universal ribosomal protein uS8 family. In terms of assembly, part of the 30S ribosomal subunit.

The protein localises to the plastid. One of the primary rRNA binding proteins, it binds directly to 16S rRNA central domain where it helps coordinate assembly of the platform of the 30S subunit. This chain is Small ribosomal subunit protein uS8c (rps8), found in Helicosporidium sp. subsp. Simulium jonesii (Green alga).